A 206-amino-acid chain; its full sequence is uncharacterized protein (206 aa).

The signal sequence occupies residues 1–18 (MSSLVLIPCALLTQGIYA).

This is an uncharacterized protein from Acanthamoeba polyphaga mimivirus (APMV).